Consider the following 462-residue polypeptide: O-methyltransferase CTB2 (462 aa).

Asp289 is an S-adenosyl-L-methionine binding site. His340 acts as the Proton acceptor in catalysis.

Belongs to the class I-like SAM-binding methyltransferase superfamily. Cation-independent O-methyltransferase family. COMT subfamily.

It participates in mycotoxin biosynthesis. In terms of biological role, O-methyltransferase; part of the gene cluster that mediates the biosynthesis of cercosporin, a light-activated, non-host-selective toxin. The perylenequinone chromophore of cercosporin absorbs light energy to attain an electronically-activated triplet state and produces active oxygen species such as the hydroxyl radical, superoxide, hydrogen peroxide or singlet oxygen upon reaction with oxygen molecules. These reactive oxygen species cause damage to various cellular components including lipids, proteins and nucleic acids. The first step of cercosporin biosynthesis is performed by the polyketide synthase CTB1 which catalyzes the formation of nor-toralactone. The starter unit acyltransferase (SAT) domain of CTB1 initiates polyketide extension by the selective utilization of acetyl-CoA, which is elongated to the heptaketide in the beta-ketoacyl synthase (KS) domain by successive condensations with six malonyl units introduced by the malonyl acyltransferase (MAT) domain. The product template (PT) domain catalyzes C4-C9 and C2-C11 aldol cyclizations and dehydrations to a trihydroxynaphthalene, which is thought to be delivered to the thioesterase (TE) domain for product release. The bifunctional enzyme CTB3 then methylates nor-toralactone to toralactone before conducting an unusual oxidative aromatic ring opening. The O-methyltransferase CTB2 further methylates the nascent OH-6 of the CBT3 product, blocking further oxidation at this site before the reductase CTB6 reduces the 2-oxopropyl ketone at position C7, giving naphthalene. The FAD-dependent monooxygenase CTB5 in concert with the multicopper oxidase CTB12 are responsible for homodimerization of naphthalene with CTB7 installing the dioxepine moiety, finally producing cercosporin. The fasciclin domain-containing protein CTB11 might act with CTB5 and CTB12 whereas the roles of CTB9 and CTB10 have still to be elucidated. This chain is O-methyltransferase CTB2, found in Cercospora beticola (Sugarbeet leaf spot fungus).